Reading from the N-terminus, the 100-residue chain is NADH-quinone oxidoreductase subunit K (100 aa).

3 consecutive transmembrane segments (helical) span residues 2–22 (IPLQHGLILAAILFVLGLTGV), 28–48 (LLFMLIGLEIMINAAALAFVV), and 60–80 (VMFILAISLAAAEASIGLALL).

Belongs to the complex I subunit 4L family. NDH-1 is composed of 13 different subunits. Subunits NuoA, H, J, K, L, M, N constitute the membrane sector of the complex.

The protein resides in the cell inner membrane. It catalyses the reaction a quinone + NADH + 5 H(+)(in) = a quinol + NAD(+) + 4 H(+)(out). NDH-1 shuttles electrons from NADH, via FMN and iron-sulfur (Fe-S) centers, to quinones in the respiratory chain. The immediate electron acceptor for the enzyme in this species is believed to be ubiquinone. Couples the redox reaction to proton translocation (for every two electrons transferred, four hydrogen ions are translocated across the cytoplasmic membrane), and thus conserves the redox energy in a proton gradient. In Erwinia tasmaniensis (strain DSM 17950 / CFBP 7177 / CIP 109463 / NCPPB 4357 / Et1/99), this protein is NADH-quinone oxidoreductase subunit K.